We begin with the raw amino-acid sequence, 229 residues long: Large ribosomal subunit protein uL1 (229 aa).

This sequence belongs to the universal ribosomal protein uL1 family. Part of the 50S ribosomal subunit.

Its function is as follows. Binds directly to 23S rRNA. The L1 stalk is quite mobile in the ribosome, and is involved in E site tRNA release. Functionally, protein L1 is also a translational repressor protein, it controls the translation of the L11 operon by binding to its mRNA. The protein is Large ribosomal subunit protein uL1 of Chlorobium phaeobacteroides (strain DSM 266 / SMG 266 / 2430).